The sequence spans 527 residues: UDP-glucuronosyltransferase 2A3 (527 aa).

Positions 1 to 23 are cleaved as a signal peptide; the sequence is MRSEKSALVFLLLQLFCVGCGFC. Topologically, residues 24–486 are extracellular; it reads GKVLVWPCDM…AAHNLTWFQH (463 aa). An N-linked (GlcNAc...) asparagine glycan is attached at Asn313. The chain crosses the membrane as a helical span at residues 487 to 507; that stretch reads YSIDVIGFLLACVATAIFLFT. Over 508-523 the chain is Cytoplasmic; sequence KCCLFSCQKFNKTRKI.

Belongs to the UDP-glycosyltransferase family.

The protein resides in the membrane. The enzyme catalyses glucuronate acceptor + UDP-alpha-D-glucuronate = acceptor beta-D-glucuronoside + UDP + H(+). Functionally, UDP-glucuronosyltransferases catalyze phase II biotransformation reactions in which lipophilic substrates are conjugated with glucuronic acid to increase water solubility and enhance excretion. They are of major importance in the conjugation and subsequent elimination of potentially toxic xenobiotics and endogenous compounds. The sequence is that of UDP-glucuronosyltransferase 2A3 (UGT2A3) from Pongo abelii (Sumatran orangutan).